Here is a 261-residue protein sequence, read N- to C-terminus: Proteasome subunit alpha type-4 (261 aa).

Phosphoserine is present on residues Ser-13 and Ser-75. Lys-127 carries the post-translational modification N6-acetyllysine. Ser-173 carries the post-translational modification Phosphoserine. The residue at position 176 (Lys-176) is an N6-acetyllysine. The disordered stretch occupies residues 240 to 261 (HEEEEAKAEREKKEKEQKEKDK).

Belongs to the peptidase T1A family. In terms of assembly, the 26S proteasome consists of a 20S proteasome core and two 19S regulatory subunits. The 20S proteasome core is a barrel-shaped complex made of 28 subunits that are arranged in four stacked rings. The two outer rings are each formed by seven alpha subunits, and the two inner rings are formed by seven beta subunits. The proteolytic activity is exerted by three beta-subunits PSMB5, PSMB6 and PSMB7.

The protein resides in the cytoplasm. It is found in the nucleus. Functionally, component of the 20S core proteasome complex involved in the proteolytic degradation of most intracellular proteins. This complex plays numerous essential roles within the cell by associating with different regulatory particles. Associated with two 19S regulatory particles, forms the 26S proteasome and thus participates in the ATP-dependent degradation of ubiquitinated proteins. The 26S proteasome plays a key role in the maintenance of protein homeostasis by removing misfolded or damaged proteins that could impair cellular functions, and by removing proteins whose functions are no longer required. Associated with the PA200 or PA28, the 20S proteasome mediates ubiquitin-independent protein degradation. This type of proteolysis is required in several pathways including spermatogenesis (20S-PA200 complex) or generation of a subset of MHC class I-presented antigenic peptides (20S-PA28 complex). The sequence is that of Proteasome subunit alpha type-4 (PSMA4) from Macaca fascicularis (Crab-eating macaque).